The chain runs to 213 residues: Superoxide dismutase [Mn] (213 aa).

Positions 27, 82, 168, and 172 each coordinate Mn(2+).

The protein belongs to the iron/manganese superoxide dismutase family. As to quaternary structure, homodimer. The cofactor is Mn(2+).

It catalyses the reaction 2 superoxide + 2 H(+) = H2O2 + O2. Its function is as follows. Destroys superoxide anion radicals which are normally produced within the cells and which are toxic to biological systems. This is Superoxide dismutase [Mn] (sodA) from Mannheimia haemolytica (Pasteurella haemolytica).